The primary structure comprises 509 residues: Protein disulfide-isomerase (509 aa).

The N-terminal stretch at 1–18 (MLRRAVLCLALAVTAGWA) is a signal peptide. Residues 19 to 135 (WAAEEEDNVL…IVNWLKKRTG (117 aa)) form the Thioredoxin 1 domain. Residues Cys-54 and Cys-57 each act as nucleophile in the active site. Cysteines 54 and 57 form a disulfide. N6-succinyllysine occurs at positions 223 and 272. Residues Ser-332 and Ser-358 each carry the phosphoserine modification. Positions 347–476 (FLEGKIKPHL…FKKFLESGGQ (130 aa)) constitute a Thioredoxin 2 domain. Active-site nucleophile residues include Cys-398 and Cys-401. Cys-398 and Cys-401 form a disulfide bridge. A Phosphoserine modification is found at Ser-428. The tract at residues 471-509 (LESGGQDGAGDEDGLEDLEEAEEPDLEEDDDQKAVRDEL) is disordered. Residues 479-501 (AGDEDGLEDLEEAEEPDLEEDDD) show a composition bias toward acidic residues. The short motif at 506–509 (RDEL) is the Prevents secretion from ER element.

It belongs to the protein disulfide isomerase family. In terms of assembly, heterodimer; heterodimerizes with the protein microsomal triglyceride transfer MTTP. Homodimer. Monomers and homotetramers may also occur. Interacts with P4HA2, forming a heterotetramer consisting of 2 alpha subunits (P4HA2) and 2 beta (P4HB), where P4HB plays the role of a structural subunit; this tetramer catalyzes the formation of 4-hydroxyproline in collagen. Also constitutes the structural subunit of the microsomal triacylglycerol transfer protein MTTP in mammalian cells. Stabilizes both enzymes and retain them in the ER without contributing to the catalytic activity. Binds UBQLN1. Interacts with ERO1B. Interacts with ILDR2. Interacts with ERN1/IRE1A (via N-terminus); the interaction is enhanced by phosphorylation of P4HB by FAM20C in response to endoplasmic reticulum stress and results in attenuation of ERN1 activity. Phosphorylation of Ser-358 by FAM20C is induced by endoplasmic reticulum stress and results in a functional switch from oxidoreductase to molecular chaperone. It also promotes interaction with ERN1.

Its subcellular location is the endoplasmic reticulum. It localises to the endoplasmic reticulum lumen. The protein localises to the melanosome. It is found in the cell membrane. The catalysed reaction is Catalyzes the rearrangement of -S-S- bonds in proteins.. Functionally, this multifunctional protein catalyzes the formation, breakage and rearrangement of disulfide bonds. At the cell surface, seems to act as a reductase that cleaves disulfide bonds of proteins attached to the cell. May therefore cause structural modifications of exofacial proteins. Inside the cell, seems to form/rearrange disulfide bonds of nascent proteins. At high concentrations and following phosphorylation by FAM20C, functions as a chaperone that inhibits aggregation of misfolded proteins. At low concentrations, facilitates aggregation (anti-chaperone activity). May be involved with other chaperones in the structural modification of the TG precursor in hormone biogenesis. Also acts as a structural subunit of various enzymes such as prolyl 4-hydroxylase and microsomal triacylglycerol transfer protein MTTP. Receptor for LGALS9; the interaction retains P4HB at the cell surface of Th2 T helper cells, increasing disulfide reductase activity at the plasma membrane, altering the plasma membrane redox state and enhancing cell migration. The protein is Protein disulfide-isomerase (P4HB) of Oryctolagus cuniculus (Rabbit).